A 201-amino-acid polypeptide reads, in one-letter code: ATP-dependent Clp protease proteolytic subunit (201 aa).

Residue S98 is the Nucleophile of the active site. The active site involves H123.

Belongs to the peptidase S14 family. Fourteen ClpP subunits assemble into 2 heptameric rings which stack back to back to give a disk-like structure with a central cavity, resembling the structure of eukaryotic proteasomes.

The protein resides in the cytoplasm. The enzyme catalyses Hydrolysis of proteins to small peptides in the presence of ATP and magnesium. alpha-casein is the usual test substrate. In the absence of ATP, only oligopeptides shorter than five residues are hydrolyzed (such as succinyl-Leu-Tyr-|-NHMec, and Leu-Tyr-Leu-|-Tyr-Trp, in which cleavage of the -Tyr-|-Leu- and -Tyr-|-Trp bonds also occurs).. Its function is as follows. Cleaves peptides in various proteins in a process that requires ATP hydrolysis. Has a chymotrypsin-like activity. Plays a major role in the degradation of misfolded proteins. This Desulfatibacillum aliphaticivorans protein is ATP-dependent Clp protease proteolytic subunit.